A 184-amino-acid polypeptide reads, in one-letter code: Putative manganese efflux pump MntP (184 aa).

The next 6 helical transmembrane spans lie at 3 to 23 (LLSM…ISVS), 36 to 56 (ALIS…LGWV), 65 to 85 (VSAL…LKMI), 103 to 123 (LLVL…SFAL), 126 to 146 (ISIW…SLAG), and 163 to 183 (ALGG…NVSF).

Belongs to the MntP (TC 9.B.29) family.

The protein localises to the cell membrane. In terms of biological role, probably functions as a manganese efflux pump. The sequence is that of Putative manganese efflux pump MntP from Methanothermobacter thermautotrophicus (strain ATCC 29096 / DSM 1053 / JCM 10044 / NBRC 100330 / Delta H) (Methanobacterium thermoautotrophicum).